Consider the following 51-residue polypeptide: Large ribosomal subunit protein bL32c (51 aa).

This sequence belongs to the bacterial ribosomal protein bL32 family.

It localises to the plastid. The protein resides in the chloroplast. The protein is Large ribosomal subunit protein bL32c of Oenothera elata subsp. hookeri (Hooker's evening primrose).